Consider the following 369-residue polypeptide: Maltose/maltodextrin import ATP-binding protein MalK (369 aa).

An ABC transporter domain is found at 4 to 234; sequence VQLRNVTKAW…PADRFVAGFI (231 aa). 36-43 contributes to the ATP binding site; sequence GPSGCGKS.

It belongs to the ABC transporter superfamily. Maltooligosaccharide importer (TC 3.A.1.1.1) family. In terms of assembly, the complex is composed of two ATP-binding proteins (MalK), two transmembrane proteins (MalG and MalK) and a solute-binding protein (MalE).

It localises to the cell inner membrane. The enzyme catalyses D-maltose(out) + ATP + H2O = D-maltose(in) + ADP + phosphate + H(+). Functionally, part of the ABC transporter complex MalEFGK involved in maltose/maltodextrin import. Responsible for energy coupling to the transport system. This is Maltose/maltodextrin import ATP-binding protein MalK from Salmonella typhi.